Consider the following 163-residue polypeptide: Cyclic pyranopterin monophosphate synthase (163 aa).

Substrate contacts are provided by residues 75 to 77 (MCH) and 115 to 116 (ME). Residue D130 is part of the active site.

It belongs to the MoaC family. Homohexamer; trimer of dimers.

The catalysed reaction is (8S)-3',8-cyclo-7,8-dihydroguanosine 5'-triphosphate = cyclic pyranopterin phosphate + diphosphate. It functions in the pathway cofactor biosynthesis; molybdopterin biosynthesis. In terms of biological role, catalyzes the conversion of (8S)-3',8-cyclo-7,8-dihydroguanosine 5'-triphosphate to cyclic pyranopterin monophosphate (cPMP). This Bacillus pumilus (strain SAFR-032) protein is Cyclic pyranopterin monophosphate synthase.